Here is a 307-residue protein sequence, read N- to C-terminus: Glutaminase (307 aa).

Residues Ser-66, Asn-116, Glu-160, Asn-167, Tyr-191, Tyr-243, and Val-261 each coordinate substrate.

This sequence belongs to the glutaminase family. As to quaternary structure, homotetramer.

The catalysed reaction is L-glutamine + H2O = L-glutamate + NH4(+). The sequence is that of Glutaminase from Saccharophagus degradans (strain 2-40 / ATCC 43961 / DSM 17024).